The following is a 583-amino-acid chain: Aspartate--tRNA ligase (583 aa).

E169 serves as a coordination point for L-aspartate. Residues 193 to 196 (QLFK) form an aspartate region. An L-aspartate-binding site is contributed by R215. Residues 215–217 (RDE) and Q224 contribute to the ATP site. H443 contributes to the L-aspartate binding site. E477 contacts ATP. R484 contacts L-aspartate. An ATP-binding site is contributed by 529–532 (GIDR).

Belongs to the class-II aminoacyl-tRNA synthetase family. Type 1 subfamily. As to quaternary structure, homodimer.

It localises to the cytoplasm. It carries out the reaction tRNA(Asp) + L-aspartate + ATP = L-aspartyl-tRNA(Asp) + AMP + diphosphate. Catalyzes the attachment of L-aspartate to tRNA(Asp) in a two-step reaction: L-aspartate is first activated by ATP to form Asp-AMP and then transferred to the acceptor end of tRNA(Asp). The polypeptide is Aspartate--tRNA ligase (Stenotrophomonas maltophilia (strain K279a)).